The primary structure comprises 601 residues: Arginine--tRNA ligase (601 aa).

A 'HIGH' region motif is present at residues 135–145; it reads ANPTGPLHLGH.

Belongs to the class-I aminoacyl-tRNA synthetase family. As to quaternary structure, monomer.

The protein localises to the cytoplasm. It carries out the reaction tRNA(Arg) + L-arginine + ATP = L-arginyl-tRNA(Arg) + AMP + diphosphate. This Gloeobacter violaceus (strain ATCC 29082 / PCC 7421) protein is Arginine--tRNA ligase.